The chain runs to 621 residues: MERYLSRRESGFHIHRSDDNSLMRRIYSSMNMFNSYHANCWPTDAGRTGAIFNLEFNADGNVVVAATERKCVLVFDAITQKEIFKVPDAHTDSVNCIKFFDERLFATGSDDFTVALWDLRNMKQKLRVLHGHSNWVKNIEYSSKDKLLVSSGFDGSIFTWDINSQTEQGLISQRVFHASGLMRCRISPTGDKLVLCTSGGYIMIIHHLDLTTLHKDLCGFRPGIYRLMQLGEQYIPQAAKYDHVFSKRQKKNRVELVTDFPENNDAEMIMALQIHPHCCCMLTRNVSCDEQSEWTCIHDINEEPVRSEDEQDEVEPQPKRKRVSTTLASRSSLNESQDQDTVGLTPRQARRPLRVSSVQVFQLDNSGAGRGASDNPSVLTRSDSFIPDIWAAEVTVQERAIRQNRARVSNNHVSGYNFVYAISSGVLPLRQLGANSLMGSSTSPRPLTTPPPTESNQSSSSSSSSSSSSSSSSSSNNSDTTVRLEIGNRLRLRSFNSPVTTPTFKENGHSILVNAKKLLYYAAETNTKPGFIKEPGFSADGRVVCSPYGNGVRLFGYSEDCCDYPKCQAFEEVKSKPRKLVELAKITEHQDVVLCAKFSPREPLLVTGCNGGEVTWYRPNL.

WD repeat units lie at residues 46–85 (GRTGAIFNLEFNADGNVVVAATERKCVLVFDAITQKEIFK), 89–127 (AHTDSVNCIKFFDERLFATGSDDFTVALWDLRNMKQKLR), 131–170 (GHSNWVKNIEYSSKDKLLVSSGFDGSIFTWDINSQTEQGL), and 176–215 (FHASGLMRCRISPTGDKLVLCTSGGYIMIIHHLDLTTLHK). Disordered regions lie at residues 305 to 349 (VRSE…PRQA) and 437 to 483 (LMGS…TTVR). Ser-307 bears the Phosphoserine mark. Polar residues predominate over residues 324 to 342 (STTLASRSSLNESQDQDTV). Residues 454–478 (ESNQSSSSSSSSSSSSSSSSSSNNS) show a composition bias toward low complexity. Phosphoserine is present on residues Ser-494 and Ser-497. Residues 588–621 (EHQDVVLCAKFSPREPLLVTGCNGGEVTWYRPNL) form a WD 5 repeat.

The protein belongs to the WD repeat DCAF10 family.

The sequence is that of DDB1- and CUL4-associated factor 10 homolog from Drosophila melanogaster (Fruit fly).